The primary structure comprises 206 residues: ATP-dependent Clp protease proteolytic subunit 2 (206 aa).

Catalysis depends on serine 100, which acts as the Nucleophile. Histidine 125 is a catalytic residue.

The protein belongs to the peptidase S14 family. In terms of assembly, fourteen ClpP subunits assemble into 2 heptameric rings which stack back to back to give a disk-like structure with a central cavity, resembling the structure of eukaryotic proteasomes.

It localises to the cytoplasm. The catalysed reaction is Hydrolysis of proteins to small peptides in the presence of ATP and magnesium. alpha-casein is the usual test substrate. In the absence of ATP, only oligopeptides shorter than five residues are hydrolyzed (such as succinyl-Leu-Tyr-|-NHMec, and Leu-Tyr-Leu-|-Tyr-Trp, in which cleavage of the -Tyr-|-Leu- and -Tyr-|-Trp bonds also occurs).. Functionally, cleaves peptides in various proteins in a process that requires ATP hydrolysis. Has a chymotrypsin-like activity. Plays a major role in the degradation of misfolded proteins. This Myxococcus xanthus protein is ATP-dependent Clp protease proteolytic subunit 2.